The following is a 123-amino-acid chain: Guanine nucleotide exchange factor MSS4 (123 aa).

M1 carries the post-translational modification N-acetylmethionine. Residues 9–123 (ELVSAEGRNR…YVALERVSHE (115 aa)) form the MSS4 domain. Zn(2+)-binding residues include C23, C26, C94, and C97.

This sequence belongs to the DSS4/MSS4 family. In terms of assembly, interacts with RAB8A.

In terms of biological role, guanine-nucleotide-releasing protein that acts on members of the SEC4/YPT1/RAB subfamily. Stimulates GDP release from both YPT1, RAB3A and RAB10, but is less active on these proteins than on the SEC4 protein. Might play a general role in vesicular transport. The polypeptide is Guanine nucleotide exchange factor MSS4 (Mus musculus (Mouse)).